Here is a 45-residue protein sequence, read N- to C-terminus: Metallothionein-like protein 1A (45 aa).

This sequence belongs to the metallothionein superfamily. Type 15 family. As to expression, expressed in phloem and mesophyll cells of leaves, vascular tissues of cotyledons, sepals and petals. Expressed in anthers. Expressed in root endodermis and at lower levels in cortex of mature region of roots.

In terms of biological role, metallothioneins have a high content of cysteine residues that bind various heavy metals. Functions as a metal chelator of copper (Cu) and zinc (Zn). Plays a role in Cu homeostasis in the roots under elevated Cu concentration. Functions cooperatively with the phytochelatin synthase PCS1 to protect plants from Cu and cadmium (Cd) toxicity. Plays a role in Cu homeostasis, specifically in the remobilization of Cu from senescing leaves. The mobilization of Cu from internal sources is important for seed development. Confers tolerance to Cd and plays a role in Cd and Zn homeostasis. This chain is Metallothionein-like protein 1A (MT1A), found in Arabidopsis thaliana (Mouse-ear cress).